Here is a 65-residue protein sequence, read N- to C-terminus: MEVSQAASGTDGVRERRGSFEAGRRNQDEAPQSGMNGLPKHSYWLDLWLFILFDLALFVFVYLLP.

Met1 is modified (N-acetylmethionine). The tract at residues 1 to 36 (MEVSQAASGTDGVRERRGSFEAGRRNQDEAPQSGMN) is disordered. A compositionally biased stretch (basic and acidic residues) spans 12-28 (GVRERRGSFEAGRRNQD). Position 19 is a phosphoserine (Ser19). A helical transmembrane segment spans residues 44-64 (WLDLWLFILFDLALFVFVYLL).

Homooligomer. Can also form heterooligomers with other sarcoplasmic/endoplasmic reticulum calcium ATPase (SERCA) regulators ERLN, PLN, SLN and STRIT1/DWORF. Monomer. Interacts as a monomer with ATP2A2/SERCA2; the interaction results in inhibition of ATP2A2 Ca(2+) affinity. As to expression, in the embryo, expressed in heart, epidermal epithelium, salivary gland, brown fat, intestinal epithelium and bladder urothelium.

Its subcellular location is the endoplasmic reticulum membrane. Inhibits the activity of the calcium ATPases ATP2A2/SERCA2 and ATP2A3/SERCA3 by decreasing their apparent affinity for Ca(2+). The chain is Sarcoplasmic/endoplasmic reticulum calcium ATPase regulator ARLN (Arln) from Mus musculus (Mouse).